The primary structure comprises 392 residues: Bone morphogenetic protein 15 (392 aa).

An N-terminal signal peptide occupies residues 1–18; that stretch reads MVLLSILRILFLCELVLF. The propeptide occupies 19–267; the sequence is MEHRAQMAEG…ERESLLRRTR (249 aa). 3 N-linked (GlcNAc...) asparagine glycosylation sites follow: Asn87, Asn147, and Asn237. Residue Gln268 is modified to Pyrrolidone carboxylic acid; in P16 and P17. The residue at position 273 (Ser273) is a Phosphoserine; in P16. Thr277 is a glycosylation site (O-linked (HexNAc...) threonine; in P17). 3 disulfides stabilise this stretch: Cys291/Cys357, Cys320/Cys389, and Cys324/Cys391. The N-linked (GlcNAc...) asparagine glycan is linked to Asn373.

This sequence belongs to the TGF-beta family. In terms of assembly, homodimer. But, in contrast to other members of this family, cannot be disulfide-linked.

It is found in the secreted. May be involved in follicular development. Oocyte-specific growth/differentiation factor that stimulates folliculogenesis and granulosa cell (GC) growth. This chain is Bone morphogenetic protein 15 (BMP15), found in Homo sapiens (Human).